Here is a 254-residue protein sequence, read N- to C-terminus: Triosephosphate isomerase (254 aa).

Residue 9–11 (NWK) coordinates substrate. His-95 serves as the catalytic Electrophile. Glu-167 serves as the catalytic Proton acceptor. Substrate-binding positions include Gly-173, Ser-213, and 234–235 (GG).

It belongs to the triosephosphate isomerase family. Homodimer.

The protein localises to the cytoplasm. It carries out the reaction D-glyceraldehyde 3-phosphate = dihydroxyacetone phosphate. The protein operates within carbohydrate biosynthesis; gluconeogenesis. Its pathway is carbohydrate degradation; glycolysis; D-glyceraldehyde 3-phosphate from glycerone phosphate: step 1/1. In terms of biological role, involved in the gluconeogenesis. Catalyzes stereospecifically the conversion of dihydroxyacetone phosphate (DHAP) to D-glyceraldehyde-3-phosphate (G3P). The protein is Triosephosphate isomerase of Roseiflexus sp. (strain RS-1).